A 548-amino-acid polypeptide reads, in one-letter code: DNA-binding protein REPIN1 (548 aa).

Residues 1-47 (MLERRCRGPTAMGPAHPWLFSGPSQESSQPNRGLRYQGKSVAQPGGP) are disordered. Residues 22 to 31 (GPSQESSQPN) show a composition bias toward polar residues. Serine 27 bears the Phosphoserine mark. Position 39 is an N6-acetyllysine (lysine 39). A C2H2-type 1; atypical zinc finger spans residues 53–75 (HRCAHCRKRFPGWVALWLHTRRC). C2H2-type zinc fingers lie at residues 81-103 (LPCH…LQVH) and 112-134 (FICH…LRAH). The segment at 141–163 (ITCPECNKRFWRQKQLRAHLRRC) adopts a C2H2-type 4; atypical zinc-finger fold. 11 C2H2-type zinc fingers span residues 173–195 (FICG…KRVH), 232–254 (FQCA…RRVH), 260–282 (HQCP…RRIH), 288–310 (YPCT…SKIH), 356–378 (HSCT…QRQH), 384–406 (FTCT…SRVH), 412–434 (FACE…RRDH), 440–462 (FVCP…RRIH), 468–490 (YVCP…RRIH), 496–518 (YACP…RKSH), and 524–546 (FCCA…QKKH). Residue lysine 272 is modified to N6-acetyllysine.

As to quaternary structure, homodimers and homomultimers. Found in a complex with RIP60 and RIP100. Expressed in the liver and in subcutaneous and visceral adipose tissue.

The protein resides in the nucleus. Its subcellular location is the cytoplasm. The protein localises to the cytosol. Sequence-specific double-stranded DNA-binding protein. Binds ATT-rich and T-rich DNA sequences and facilitates DNA bending. May regulate the expression of genes involved in cellular fatty acid import, including SCARB1/CD36, and genes involved in lipid droplet formation. May regulate the expression of LCN2, and thereby influence iron metabolism and apoptosis-related pathways. May regulate the expression of genes involved in glucose transport. The polypeptide is DNA-binding protein REPIN1 (Repin1) (Rattus norvegicus (Rat)).